An 88-amino-acid polypeptide reads, in one-letter code: uncharacterized protein (88 aa).

This is an uncharacterized protein from Homo sapiens (Human).